Consider the following 428-residue polypeptide: Histidinol dehydrogenase (428 aa).

Serine 234, glutamine 256, and histidine 259 together coordinate substrate. Positions 256 and 259 each coordinate Zn(2+). Residues glutamate 323 and histidine 324 each act as proton acceptor in the active site. Residues histidine 324, aspartate 357, glutamate 411, and histidine 416 each coordinate substrate. Position 357 (aspartate 357) interacts with Zn(2+). Position 416 (histidine 416) interacts with Zn(2+).

It belongs to the histidinol dehydrogenase family. It depends on Zn(2+) as a cofactor.

It carries out the reaction L-histidinol + 2 NAD(+) + H2O = L-histidine + 2 NADH + 3 H(+). It functions in the pathway amino-acid biosynthesis; L-histidine biosynthesis; L-histidine from 5-phospho-alpha-D-ribose 1-diphosphate: step 9/9. Functionally, catalyzes the sequential NAD-dependent oxidations of L-histidinol to L-histidinaldehyde and then to L-histidine. The protein is Histidinol dehydrogenase of Campylobacter jejuni (strain RM1221).